We begin with the raw amino-acid sequence, 461 residues long: ATP synthase subunit beta (461 aa).

Residue 149–156 (GGAGVGKT) participates in ATP binding.

This sequence belongs to the ATPase alpha/beta chains family. As to quaternary structure, F-type ATPases have 2 components, CF(1) - the catalytic core - and CF(0) - the membrane proton channel. CF(1) has five subunits: alpha(3), beta(3), gamma(1), delta(1), epsilon(1). CF(0) has three main subunits: a(1), b(2) and c(9-12). The alpha and beta chains form an alternating ring which encloses part of the gamma chain. CF(1) is attached to CF(0) by a central stalk formed by the gamma and epsilon chains, while a peripheral stalk is formed by the delta and b chains.

The protein localises to the cell membrane. The catalysed reaction is ATP + H2O + 4 H(+)(in) = ADP + phosphate + 5 H(+)(out). Its function is as follows. Produces ATP from ADP in the presence of a proton gradient across the membrane. The catalytic sites are hosted primarily by the beta subunits. The chain is ATP synthase subunit beta from Caldanaerobacter subterraneus subsp. tengcongensis (strain DSM 15242 / JCM 11007 / NBRC 100824 / MB4) (Thermoanaerobacter tengcongensis).